Reading from the N-terminus, the 465-residue chain is Sodium-dependent phosphate transport protein 1 (465 aa).

N-linked (GlcNAc...) asparagine glycans are attached at residues Asn47 and Asn56. 10 helical membrane-spanning segments follow: residues 79–99, 109–129, 171–191, 198–218, 255–275, 304–324, 337–357, 363–383, 399–419, and 428–448; these read GIIFSSIFYGAFLIQIPVGYI, IGFALFLSSLVSIFIPQAAAV, MSLSGFLLGPFIVLLVTGIIC, MVFYIFGACGCAVCLLWFVLY, AMIKSLPLWAISFCCFAYLWT, LPYLFAWICGVIAGHTADFLM, LFTAIGLLLPIVFSMCLLYLS, TITFLILANASSSFCLGGALI, VTTLIGMTGGMTSSTVAGLFL, and FKIFLLMSIINVISVIFYLIF.

It belongs to the major facilitator superfamily. Sodium/anion cotransporter family. As to quaternary structure, interacts with PDZK1. In terms of tissue distribution, kidney cortex and liver.

The protein resides in the apical cell membrane. It carries out the reaction 3 Na(+)(out) + phosphate(out) = 3 Na(+)(in) + phosphate(in). The enzyme catalyses urate(out) = urate(in). Its function is as follows. Important for the resorption of phosphate by the kidney. May be involved in actively transporting phosphate into cells via Na(+) cotransport in the renal brush border membrane. Plays a role in urate transport in the kidney. This chain is Sodium-dependent phosphate transport protein 1 (SLC17A1), found in Oryctolagus cuniculus (Rabbit).